The sequence spans 309 residues: Protein FdhE homolog (309 aa).

This sequence belongs to the FdhE family.

It is found in the cytoplasm. Functionally, necessary for formate dehydrogenase activity. The chain is Protein FdhE homolog from Pasteurella multocida (strain Pm70).